We begin with the raw amino-acid sequence, 438 residues long: Tol-Pal system protein TolB (438 aa).

An N-terminal signal peptide occupies residues 1 to 21; that stretch reads MVKRSLLVLALLICLPATLFA.

It belongs to the TolB family. As to quaternary structure, the Tol-Pal system is composed of five core proteins: the inner membrane proteins TolA, TolQ and TolR, the periplasmic protein TolB and the outer membrane protein Pal. They form a network linking the inner and outer membranes and the peptidoglycan layer.

It localises to the periplasm. Its function is as follows. Part of the Tol-Pal system, which plays a role in outer membrane invagination during cell division and is important for maintaining outer membrane integrity. This Desulfosudis oleivorans (strain DSM 6200 / JCM 39069 / Hxd3) (Desulfococcus oleovorans) protein is Tol-Pal system protein TolB.